The sequence spans 1304 residues: DNA-directed RNA polymerase subunit beta' (1304 aa).

The Zn(2+) site is built by C60, C62, C75, and C78. Mg(2+) is bound by residues D541, D543, and D545. Residues C887, C963, C970, and C973 each contribute to the Zn(2+) site.

It belongs to the RNA polymerase beta' chain family. In terms of assembly, the RNAP catalytic core consists of 2 alpha, 1 beta, 1 beta' and 1 omega subunit. When a sigma factor is associated with the core the holoenzyme is formed, which can initiate transcription. It depends on Mg(2+) as a cofactor. The cofactor is Zn(2+).

It carries out the reaction RNA(n) + a ribonucleoside 5'-triphosphate = RNA(n+1) + diphosphate. In terms of biological role, DNA-dependent RNA polymerase catalyzes the transcription of DNA into RNA using the four ribonucleoside triphosphates as substrates. The sequence is that of DNA-directed RNA polymerase subunit beta' from Acidothermus cellulolyticus (strain ATCC 43068 / DSM 8971 / 11B).